The sequence spans 112 residues: uncharacterized protein (112 aa).

Disordered regions lie at residues 1 to 53 (MSKL…QRLK) and 80 to 112 (MINQ…MLEL). The span at 8–22 (SALQKLIESQKNPNA) shows a compositional bias: polar residues. Residues 86-96 (ETKKRKRKQKK) are compositionally biased toward basic residues. A compositionally biased stretch (acidic residues) spans 101-112 (DYGVFEEDMLEL).

It is found in the nucleus. The protein localises to the nucleolus. This is an uncharacterized protein from Schizosaccharomyces pombe (strain 972 / ATCC 24843) (Fission yeast).